Reading from the N-terminus, the 552-residue chain is MSPPPPPPIWRQLSFSLLLGSFCIALESAAQGNSATDALNILLIIVDDLRPSLGCYGDKLVRSPNIDQLASHSVLFQNAFAQQAVCAPSRVSFLTGRRPDTTRLYDFNSYWRVHSGNFSTIPQYFKENGYVTMSVGKVFHPGISSNHSDDYPYSWSFPPYHPSSEKYENTKTCKGQDGKLHANLLCPVDVADVPEGTLPDKQSTEEAIRLLEKMKTSASPFFLAVGYHKPHIPFRYPKEFQKLYPLENITLAPDPHVPDSLPPVAYNPWMDIREREDVQALNISVPYGPIPEDFQRKIRQSYFASVSYLDTQVGHVLSALDDLRLAHNTIIAFTSDHGWALGEHGEWAKYSNFDVATRVPLMLYVPGRTAPLPAAGQKLFPYRDPFDPASDWMDAGRHTEDLVELVSLFPTLAGLAGLPVPPRCPIPSFHVELCREGQNLQKHLQLHDLEEEPDLFGNPRELIAYSQYPRPADFPQWNSDKPSLNDIKVMGYSIRTVDYRYTVWVGFDPSEFLANFSDIHAGELYFVDSDPLQDHNVYNDSQHGGLLHSLRP.

The N-terminal stretch at 1–29 (MSPPPPPPIWRQLSFSLLLGSFCIALESA) is a signal peptide. Residues 30 to 35 (AQGNSA) constitute a propeptide that is removed on maturation. Residues Asp-47, Asp-48, and Cys-86 each coordinate Ca(2+). Cys-86 functions as the Nucleophile in the catalytic mechanism. Position 86 is a 3-oxoalanine (Cys) (Cys-86). The N-linked (GlcNAc...) asparagine glycan is linked to Asn-117. His-140 is a catalytic residue. Asn-146 carries an N-linked (GlcNAc...) asparagine glycan. Residues Cys-173 and Cys-186 are joined by a disulfide bond. N-linked (GlcNAc...) asparagine glycosylation is found at Asn-248 and Asn-282. Asp-336 and His-337 together coordinate Ca(2+). Residues Cys-424 and Cys-434 are joined by a disulfide bond. N-linked (GlcNAc...) asparagine glycans are attached at residues Asn-515 and Asn-539.

It belongs to the sulfatase family. As to quaternary structure, monomer. The 58-kDa mature form is composed of two chains resulting from proteolitic processing, the 42-kDa chain and the 14-kDa chain that remain stably associated and form the 58-kDa intermediate form which is enzymatically active. The cofactor is Ca(2+). Synthesized as a 75-kDa precursor form in the endoplasmic reticulum (ER), and then processed by proteolytic cleavage through various intermediates to yield a 55-kDa mature form, with the release of an 18 kDa polypeptide. Post-translationally, the conversion to 3-oxoalanine (also known as C-formylglycine, FGly), of a serine or cysteine residue in prokaryotes and of a cysteine residue in eukaryotes, is critical for catalytic activity. As to expression, found to be expressed in alpha and beta pancreatic cells.

The protein resides in the lysosome. It carries out the reaction Hydrolysis of the 2-sulfate groups of the L-iduronate 2-sulfate units of dermatan sulfate, heparan sulfate and heparin.. Its function is as follows. Lysosomal enzyme involved in the degradation pathway of dermatan sulfate and heparan sulfate. This chain is Iduronate 2-sulfatase (Ids), found in Mus musculus (Mouse).